A 383-amino-acid polypeptide reads, in one-letter code: MFEPMELTNDAVIKVIGVGGGGGNAVEHMVRERIEGVEFFAVNTDAQALRKTAVGQTIQIGSGITKGLGAGANPEVGRNAADEDRDALRAALEGADMVFIAAGMGGGTGTGAAPVVAEVAKDLGILTVAVVTKPFNFEGKKRMAFAEQGITELSKHVDSLITIPNDKLLKVLGRGISLLDAFGAANDVLKGAVQGIAELITRPGLMNVDFADVRTVMSEMGYAMMGSGVASGENRAEEAAEMAISSPLLEDIDLSGARGVLVNITAGFDLGLVEVETVGNTIRAFASGNATVVIGTSLDPDMNDELRVTVVATGIGMDKRPEITLVTNKQVQQPVMDRYQQHGMAPLTQEQKPVAKVVNDNAPQTAKEPDYLDIPAFVRKQAD.

GTP-binding positions include 20–24 (GGGGN), 107–109 (GTG), glutamate 138, arginine 142, and asparagine 186.

Belongs to the FtsZ family. Homodimer. Polymerizes to form a dynamic ring structure in a strictly GTP-dependent manner. Interacts directly with several other division proteins.

It localises to the cytoplasm. Essential cell division protein that forms a contractile ring structure (Z ring) at the future cell division site. The regulation of the ring assembly controls the timing and the location of cell division. One of the functions of the FtsZ ring is to recruit other cell division proteins to the septum to produce a new cell wall between the dividing cells. Binds GTP and shows GTPase activity. This is Cell division protein FtsZ from Shigella flexneri.